The sequence spans 452 residues: Methionine aminopeptidase 2 (452 aa).

A disordered region spans residues 1 to 91 (MTGVTGTEDT…KNKKKKKKKI (91 aa)). Over residues 8–38 (EDTKVIESKINELNIDKSKPEKTNKVNKSDD) the composition is skewed to basic and acidic residues. Over residues 39–62 (VDNDDVDNDDNDDEDNDDDDDEIT) the composition is skewed to acidic residues. The span at 74–91 (KKKKKNKNKNKKKKKKKI) shows a compositional bias: basic residues. Substrate is bound at residue His203. Asp223, Asp234, and His305 together coordinate a divalent metal cation. Residue His313 coordinates substrate. A divalent metal cation is bound by residues Glu338 and Glu433.

It belongs to the peptidase M24A family. Methionine aminopeptidase eukaryotic type 2 subfamily. The cofactor is Co(2+). Zn(2+) serves as cofactor. Requires Mn(2+) as cofactor. It depends on Fe(2+) as a cofactor.

It localises to the cytoplasm. The catalysed reaction is Release of N-terminal amino acids, preferentially methionine, from peptides and arylamides.. Cotranslationally removes the N-terminal methionine from nascent proteins. The N-terminal methionine is often cleaved when the second residue in the primary sequence is small and uncharged (Met-Ala-, Cys, Gly, Pro, Ser, Thr, or Val). The protein is Methionine aminopeptidase 2 of Candida dubliniensis (strain CD36 / ATCC MYA-646 / CBS 7987 / NCPF 3949 / NRRL Y-17841) (Yeast).